A 320-amino-acid polypeptide reads, in one-letter code: ATP-dependent 6-phosphofructokinase (320 aa).

Gly12 contacts ATP. Residue 22 to 26 (RGVVR) coordinates ADP. ATP is bound by residues 73-74 (RF) and 103-106 (GDGS). Asp104 contacts Mg(2+). 126-128 (TID) contributes to the substrate binding site. The Proton acceptor role is filled by Asp128. ADP is bound at residue Arg155. Residues Arg163 and 170–172 (MGR) contribute to the substrate site. Residues 186-188 (GCE), Lys212, and 214-216 (KKH) each bind ADP. Residues Glu223, Arg244, and 250–253 (HIQR) contribute to the substrate site.

Belongs to the phosphofructokinase type A (PFKA) family. ATP-dependent PFK group I subfamily. Prokaryotic clade 'B1' sub-subfamily. In terms of assembly, homotetramer. Mg(2+) serves as cofactor.

It is found in the cytoplasm. It catalyses the reaction beta-D-fructose 6-phosphate + ATP = beta-D-fructose 1,6-bisphosphate + ADP + H(+). The protein operates within carbohydrate degradation; glycolysis; D-glyceraldehyde 3-phosphate and glycerone phosphate from D-glucose: step 3/4. Allosterically activated by ADP and other diphosphonucleosides, and allosterically inhibited by phosphoenolpyruvate. Catalyzes the phosphorylation of D-fructose 6-phosphate to fructose 1,6-bisphosphate by ATP, the first committing step of glycolysis. In Aliivibrio salmonicida (strain LFI1238) (Vibrio salmonicida (strain LFI1238)), this protein is ATP-dependent 6-phosphofructokinase.